The primary structure comprises 259 residues: Probable ABC transporter permease protein RC0129 (259 aa).

The next 5 membrane-spanning stretches (helical) occupy residues 13 to 35 (TVKF…SSII), 49 to 69 (LFIG…SGAV), 148 to 168 (VITA…IGVM), 195 to 215 (PIDV…ISII), and 237 to 257 (AVVN…ELFF).

This sequence belongs to the MlaE permease family.

The protein localises to the cell inner membrane. In terms of biological role, could be part of an ABC transporter complex. This Rickettsia conorii (strain ATCC VR-613 / Malish 7) protein is Probable ABC transporter permease protein RC0129.